We begin with the raw amino-acid sequence, 167 residues long: Cell division protein SepF (167 aa).

A disordered region spans residues 25 to 64 (EEDVAPVNNSTFQEKKHKKRSAVQRKQKNSDQEGDSVVPL). The segment covering 39 to 51 (KKHKKRSAVQRKQ) has biased composition (basic residues).

The protein belongs to the SepF family. As to quaternary structure, homodimer. Interacts with FtsZ.

The protein resides in the cytoplasm. Its function is as follows. Cell division protein that is part of the divisome complex and is recruited early to the Z-ring. Probably stimulates Z-ring formation, perhaps through the cross-linking of FtsZ protofilaments. Its function overlaps with FtsA. In Natranaerobius thermophilus (strain ATCC BAA-1301 / DSM 18059 / JW/NM-WN-LF), this protein is Cell division protein SepF.